The chain runs to 345 residues: Fructose-1,6-bisphosphatase class 1 1 (345 aa).

Mg(2+) is bound by residues Glu90, Asp109, Leu111, and Asp112. Substrate is bound by residues Asp112–Ser115 and Asn200. Glu272 contributes to the Mg(2+) binding site.

It belongs to the FBPase class 1 family. Homotetramer. Mg(2+) serves as cofactor.

Its subcellular location is the cytoplasm. It carries out the reaction beta-D-fructose 1,6-bisphosphate + H2O = beta-D-fructose 6-phosphate + phosphate. It functions in the pathway carbohydrate biosynthesis; gluconeogenesis. The protein is Fructose-1,6-bisphosphatase class 1 1 of Nitrobacter hamburgensis (strain DSM 10229 / NCIMB 13809 / X14).